A 404-amino-acid polypeptide reads, in one-letter code: G2/mitotic-specific cyclin-B1 (404 aa).

This sequence belongs to the cyclin family. Cyclin AB subfamily. As to quaternary structure, interacts with the CDK1 protein kinase to form a serine/threonine kinase holoenzyme complex also known as maturation promoting factor (MPF). The cyclin subunit imparts substrate specificity to the complex.

Essential for the control of the cell cycle at the G2/M (mitosis) transition. The sequence is that of G2/mitotic-specific cyclin-B1 (ccnb1) from Oryzias latipes (Japanese rice fish).